The following is a 174-amino-acid chain: MVSFKSSSLFLHSLSALLVLTTLSSAAVNAGFVEMEIDTDEHTQPPKNAAYACVIKSTSCKSTSHFTSDVTYSPALNVTTCHHNGPLRNMWNRVVPWSDGHGMFVNTFYVADVQSDVSRTKADCDVSKLGKKTADDIRDIMDDNINTQTSCNAYIQCYDIKDVDNKCLPVSKDD.

The N-terminal stretch at 1–26 (MVSFKSSSLFLHSLSALLVLTTLSSA) is a signal peptide. N-linked (GlcNAc...) asparagine glycosylation occurs at asparagine 77.

As to quaternary structure, secreted cysteine-rich proteins (SCRPs) are predicted to form amyloids.

It localises to the secreted. Its function is as follows. Secreted cysteine-rich protein that might form amyloid strutures which are involved in attachment to hydrophobic surfaces and in formation of hydrophobic aerial hyphae. In Mycosarcoma maydis (Corn smut fungus), this protein is Secreted cysteine-rich protein UMAG_00792.